The following is a 529-amino-acid chain: Cytochrome P450 monooxygenase ausG (529 aa).

Residues 31–51 (FLVTCGLPWLLLLFSVTIILF) form a helical membrane-spanning segment. Residue cysteine 470 participates in heme binding.

Belongs to the cytochrome P450 family. Heme serves as cofactor.

The protein localises to the membrane. Its pathway is secondary metabolite biosynthesis; terpenoid biosynthesis. Cytochrome P450 monooxygenase; part of the gene cluster B that mediates the biosynthesis of austinol and dehydroaustinol, two fungal meroterpenoids. The first step of the pathway is the synthesis of 3,5-dimethylorsellinic acid by the polyketide synthase ausA. 3,5-dimethylorsellinic acid is then prenylated by the polyprenyl transferase ausN. Further epoxidation by the FAD-dependent monooxygenase ausM and cyclization by the probable terpene cyclase ausL lead to the formation of protoaustinoid A. Protoaustinoid A is then oxidized to spiro-lactone preaustinoid A3 by the combined action of the FAD-binding monooxygenases ausB and ausC, and the dioxygenase ausE. Acid-catalyzed keto-rearrangement and ring contraction of the tetraketide portion of preaustinoid A3 by ausJ lead to the formation of preaustinoid A4. The aldo-keto reductase ausK, with the help of ausH, is involved in the next step by transforming preaustinoid A4 into isoaustinone which is in turn hydroxylated by the P450 monooxygenase ausI to form austinolide. Finally, the cytochrome P450 monooxygenase ausG modifies austinolide to austinol. Austinol can be further modified to dehydroaustinol which forms a diffusible complex with diorcinol that initiates conidiation. Due to genetic rearrangements of the clusters and the subsequent loss of some enzymes, the end products of the Emericella nidulans austinoid biosynthesis clusters are austinol and dehydroaustinol, even if additional enzymes, such as the O-acetyltransferase ausQ and the cytochrome P450 monooxygenase ausR are still functional. In Emericella nidulans (strain FGSC A4 / ATCC 38163 / CBS 112.46 / NRRL 194 / M139) (Aspergillus nidulans), this protein is Cytochrome P450 monooxygenase ausG.